The chain runs to 144 residues: Benzoylsuccinyl-CoA thiolase subunit BbsA (144 aa).

C40, C43, C54, and C57 together coordinate Zn(2+).

It belongs to the BbsA family. Heterotetramer composed of two BbsA subunits and two BbsB subunits. BbsA forms homodimeric subcomplexes. Both BbsA and BbsB are essential for enzymatic activity.

It carries out the reaction (S)-2-benzoylsuccinyl-CoA + CoA = benzoyl-CoA + succinyl-CoA. Its pathway is xenobiotic degradation; toluene degradation. Functionally, component of the BbsAB thiolase complex, which catalyzes the thiolytic cleavage of (S)-2-benzoylsuccinyl-CoA to succinyl-CoA and benzoyl-CoA, the final step of anaerobic toluene metabolism. The BbsA subunit critically contributes to an induced-fit process for productive binding of a CoA substrate into the active site of BbsB. The polypeptide is Benzoylsuccinyl-CoA thiolase subunit BbsA (Thauera aromatica).